A 279-amino-acid polypeptide reads, in one-letter code: Pantothenate synthetase (279 aa).

27 to 34 contributes to the ATP binding site; it reads MGYLHEGH. H34 functions as the Proton donor in the catalytic mechanism. Q58 is a binding site for (R)-pantoate. Q58 is a beta-alanine binding site. 144-147 lines the ATP pocket; the sequence is GKKD. Q150 lines the (R)-pantoate pocket. ATP-binding positions include V173 and 181-184; that span reads MSSR.

This sequence belongs to the pantothenate synthetase family. Homodimer.

The protein localises to the cytoplasm. It catalyses the reaction (R)-pantoate + beta-alanine + ATP = (R)-pantothenate + AMP + diphosphate + H(+). It participates in cofactor biosynthesis; (R)-pantothenate biosynthesis; (R)-pantothenate from (R)-pantoate and beta-alanine: step 1/1. Its function is as follows. Catalyzes the condensation of pantoate with beta-alanine in an ATP-dependent reaction via a pantoyl-adenylate intermediate. In Geobacter sp. (strain M21), this protein is Pantothenate synthetase.